We begin with the raw amino-acid sequence, 686 residues long: Lysophospholipase 3 (686 aa).

A signal peptide spans M1–A26. The 554-residue stretch at S39–D592 folds into the PLA2c domain. N-linked (GlcNAc...) asparagine glycosylation is found at N56, N82, N129, N166, N221, N283, N313, N351, N495, N519, N547, N571, N588, and N614. N659 carries the GPI-anchor amidated asparagine lipid modification. A propeptide spans S660 to V686 (removed in mature form).

It belongs to the lysophospholipase family.

Its subcellular location is the cell membrane. It catalyses the reaction a 1-acyl-sn-glycero-3-phosphocholine + H2O = sn-glycerol 3-phosphocholine + a fatty acid + H(+). In terms of biological role, sequentially removes both fatty acyl groups from diacylglycerophospholipids and therefore has both phospholipase A and lysophospholipase activities. Substrate preference is phosphatidylserine &gt; phosphatidylinositol. Does not cleave phosphatidylcholine, phosphatidylethanolamine, phosphatidic acid and phosphatidylinositol-bisphosphate. Mainly responsible for the degradation of phosphatidylinositol in vivo. This Saccharomyces cerevisiae (strain ATCC 204508 / S288c) (Baker's yeast) protein is Lysophospholipase 3 (PLB3).